The following is a 221-amino-acid chain: Transcription factor bHLH148 (221 aa).

Disordered stretches follow at residues 1–45 (MASL…GEIH) and 70–89 (LNSS…GKAV). Composition is skewed to low complexity over residues 26 to 41 (SASS…SSVS) and 72 to 82 (SSASTSSSPTA). Positions 148–197 (KRRVSVLRLNKKSIPDVNRKVRVLGRLVPGCGKQSVPVILEEATDYIQAL) constitute a bHLH domain.

In terms of assembly, homodimer. Interacts with PRE3. Binds to RSA1.

The protein localises to the nucleus. In terms of biological role, bHLH transcription factor that binds DNA on specific sequence 5'-CANNTG-3' in target gene promoters. Negatively regulates brassinosteroid signaling. Together with BHLH148/RITF1, regulates the transcription of several genes involved in the detoxification of reactive oxygen species (ROS) generated by salt (NaCl) stress. Confers tolerance to salt and to the oxidative stress-inducing reagents hydrogen peroxide H(2)O(2) and methyl viologen (MV). The protein is Transcription factor bHLH148 of Arabidopsis thaliana (Mouse-ear cress).